The chain runs to 322 residues: Undecaprenyl-phosphate 4-deoxy-4-formamido-L-arabinose transferase (322 aa).

Residues 1 to 235 (MFEIHPVKKV…TCLTTTPLRM (235 aa)) lie on the Cytoplasmic side of the membrane. The chain crosses the membrane as a helical span at residues 236–256 (LSLLGSIIAIGGFSIAVLLVI). Residues 257-269 (LRLTFGPQWAAEG) lie on the Periplasmic side of the membrane. A helical transmembrane segment spans residues 270–290 (VFMLFAVLFTFIGAQFIGMGL). The Cytoplasmic segment spans residues 291 to 322 (LGEYIGRIYTDVRARPRYFVQQVIRPSSKENE).

It belongs to the glycosyltransferase 2 family.

Its subcellular location is the cell inner membrane. The catalysed reaction is UDP-4-deoxy-4-formamido-beta-L-arabinose + di-trans,octa-cis-undecaprenyl phosphate = 4-deoxy-4-formamido-alpha-L-arabinopyranosyl di-trans,octa-cis-undecaprenyl phosphate + UDP. Its pathway is glycolipid biosynthesis; 4-amino-4-deoxy-alpha-L-arabinose undecaprenyl phosphate biosynthesis; 4-amino-4-deoxy-alpha-L-arabinose undecaprenyl phosphate from UDP-4-deoxy-4-formamido-beta-L-arabinose and undecaprenyl phosphate: step 1/2. It functions in the pathway bacterial outer membrane biogenesis; lipopolysaccharide biosynthesis. In terms of biological role, catalyzes the transfer of 4-deoxy-4-formamido-L-arabinose from UDP to undecaprenyl phosphate. The modified arabinose is attached to lipid A and is required for resistance to polymyxin and cationic antimicrobial peptides. The chain is Undecaprenyl-phosphate 4-deoxy-4-formamido-L-arabinose transferase from Escherichia coli O157:H7 (strain EC4115 / EHEC).